A 251-amino-acid polypeptide reads, in one-letter code: uncharacterized protein (251 aa).

Positions 5, 7, 101, 132, 163, and 209 each coordinate a divalent metal cation.

It belongs to the metallo-dependent hydrolases superfamily. TatD-type hydrolase family. Requires a divalent metal cation as cofactor.

This is an uncharacterized protein from Methanocaldococcus jannaschii (strain ATCC 43067 / DSM 2661 / JAL-1 / JCM 10045 / NBRC 100440) (Methanococcus jannaschii).